A 404-amino-acid polypeptide reads, in one-letter code: Chorismate synthase (404 aa).

Residues arginine 40 and arginine 46 each coordinate NADP(+). FMN is bound by residues 133 to 135 (RSS), 266 to 267 (QA), glycine 313, 328 to 332 (KPIPT), and arginine 354. Residues 283–320 (PGSQVHDPIEPREDGAQAYPRRTNHAGGTEGGTTTGMP) form a disordered region. The tract at residues 337-357 (LDSVDTATGEPEPTRYERSDI) is disordered.

This sequence belongs to the chorismate synthase family. As to quaternary structure, homotetramer. FMNH2 serves as cofactor.

The catalysed reaction is 5-O-(1-carboxyvinyl)-3-phosphoshikimate = chorismate + phosphate. The protein operates within metabolic intermediate biosynthesis; chorismate biosynthesis; chorismate from D-erythrose 4-phosphate and phosphoenolpyruvate: step 7/7. In terms of biological role, catalyzes the anti-1,4-elimination of the C-3 phosphate and the C-6 proR hydrogen from 5-enolpyruvylshikimate-3-phosphate (EPSP) to yield chorismate, which is the branch point compound that serves as the starting substrate for the three terminal pathways of aromatic amino acid biosynthesis. This reaction introduces a second double bond into the aromatic ring system. The polypeptide is Chorismate synthase (Salinibacter ruber (strain DSM 13855 / M31)).